The primary structure comprises 264 residues: Myozenin-2 (264 aa).

Residue R53 is modified to Omega-N-methylarginine. The segment at 90–135 is disordered; it reads GRVDGSNLEGGSQQGPSTPPNTPDPRSPPNPENIAPGYSGPLKEIP. Position 101 is a phosphoserine (S101). Residues 106-120 show a composition bias toward pro residues; that stretch reads STPPNTPDPRSPPNP. Residues T107 and T111 each carry the phosphothreonine modification. Residue S116 is modified to Phosphoserine.

Belongs to the myozenin family. As to quaternary structure, interacts via its C-terminus with spectrin repeats 3 and 4 of ACTN2. Interacts with ACTN1, LDB3, MYOT and PPP3CA. As to expression, expressed specifically in heart and skeletal muscle. In skeletal muscle, localized to the soleus and plantaris muscles, which are predominantly composed of slow-twitch fibers.

The protein localises to the cytoplasm. Its subcellular location is the myofibril. The protein resides in the sarcomere. It is found in the z line. Its function is as follows. Myozenins may serve as intracellular binding proteins involved in linking Z line proteins such as alpha-actinin, gamma-filamin, TCAP/telethonin, LDB3/ZASP and localizing calcineurin signaling to the sarcomere. Plays an important role in the modulation of calcineurin signaling. May play a role in myofibrillogenesis. This is Myozenin-2 from Mus musculus (Mouse).